The chain runs to 580 residues: Rap guanine nucleotide exchange factor 5 (580 aa).

Residues 68–201 form the N-terminal Ras-GEF domain; sequence DRYVVVSGTP…ELKEFQKILG (134 aa). The Ras-GEF domain maps to 345 to 579; sequence NTWDLALELM…FELSHRIEPR (235 aa).

Widely expressed with highest levels in brain.

It localises to the nucleus. Its function is as follows. Guanine nucleotide exchange factor (GEF) for RAP1A, RAP2A and MRAS/M-Ras-GTP. Its association with MRAS inhibits Rap1 activation. The sequence is that of Rap guanine nucleotide exchange factor 5 (RAPGEF5) from Homo sapiens (Human).